Reading from the N-terminus, the 129-residue chain is uncharacterized protein (129 aa).

Residues 5–25 form a helical membrane-spanning segment; it reads IIGLTLAFFVLFLTAVAILFT.

The protein resides in the membrane. This is an uncharacterized protein from Mycoplasma pneumoniae (strain ATCC 29342 / M129 / Subtype 1) (Mycoplasmoides pneumoniae).